The primary structure comprises 1033 residues: E3 ubiquitin-protein ligase Topors (1033 aa).

Pro residues predominate over residues 1-10 (MGSQPPPPGS). Residues 1–36 (MGSQPPPPGSPLSREEGEAPPLVPAEEGRRRSRRVR) form a disordered region. The interval 52 to 376 (ELASNGPAVP…MAAFDQHANY (325 aa)) is required for DNA-binding. Glycyl lysine isopeptide (Lys-Gly) (interchain with G-Cter in SUMO2) cross-links involve residues K74, K77, K84, and K89. The residue at position 99 (S99) is a Phosphoserine. The RING-type zinc finger occupies 104–143 (CPICLDRFDNVSYLDRCLHKFCFRCVQEWSKNKAECPLCK). K160 is covalently cross-linked (Glycyl lysine isopeptide (Lys-Gly) (interchain with G-Cter in SUMO2)). S196 carries the post-translational modification Phosphoserine. K251 participates in a covalent cross-link: Glycyl lysine isopeptide (Lys-Gly) (interchain with G-Cter in SUMO2). Disordered stretches follow at residues 414–477 (QAPW…SSSD) and 496–692 (VELS…RYYL). The segment covering 434–444 (VGVSSLLNSSD) has biased composition (low complexity). The segment at 438 to 574 (SLLNSSDSSD…RSTSLPAPRD (137 aa)) is sumoylation and localization to discrete nuclear foci. Positions 438 to 654 (SLLNSSDSSD…RSRTRDSSWS (217 aa)) are interaction with SUMO1. Over residues 455–464 (TTSQIQGVQT) the composition is skewed to polar residues. The tract at residues 457–731 (SQIQGVQTND…RRTLSRAHYS (275 aa)) is interaction with p53/TP53. The interaction with TOP1 stretch occupies residues 457–879 (SQIQGVQTND…GKATDTSKHH (423 aa)). Low complexity predominate over residues 465–477 (NDDVNNDSDSSSD). S500 carries the phosphoserine modification. The segment covering 507 to 518 (PYEKVETVKTQE) has biased composition (basic and acidic residues). Low complexity predominate over residues 522–535 (SYSSGDSDVSRASS). Residues 540 to 566 (LGKDEQMSKSHCDSDTRISSKKEEKRS) are compositionally biased toward basic and acidic residues. Residue K561 forms a Glycyl lysine isopeptide (Lys-Gly) (interchain with G-Cter in SUMO) linkage. At S585 the chain carries Phosphoserine. 2 stretches are compositionally biased toward basic residues: residues 613–629 (RNHR…KRSR) and 637–647 (PRARKDKKRSR). Positions 654-669 (SRRSQTLSLSSGSTSR) are enriched in low complexity. K701 participates in a covalent cross-link: Glycyl lysine isopeptide (Lys-Gly) (interchain with G-Cter in SUMO2). Disordered stretches follow at residues 713–934 (RDGY…PIQD) and 970–1033 (TVEN…CDVS). S718 bears the Phosphoserine; by PLK1 mark. Over residues 721–730 (RRRTLSRAHY) the composition is skewed to basic residues. Over residues 731-747 (SRQSSSPEFRIQSFSER) the composition is skewed to polar residues. At S734 the chain carries Phosphoserine. Positions 770 to 780 (SVSSNRSRTTS) are enriched in low complexity. A compositionally biased stretch (basic and acidic residues) spans 815 to 837 (FTSKGKDSHYQKSKLDGSYKNES). Glycyl lysine isopeptide (Lys-Gly) (interchain with G-Cter in SUMO2) cross-links involve residues K818 and K834. Over residues 851–860 (KHKRRRRRTR) the composition is skewed to basic residues. The interaction with UBE2I stretch occupies residues 851–914 (KHKRRRRRTR…ITIDSDSDGE (64 aa)). S861 and S863 each carry phosphoserine. Positions 877–894 (KHHKKKKKKHKKKHKKHH) are enriched in basic residues. A phosphoserine mark is found at S909, S911, S999, S1016, and S1025. Residues 992–1008 (TFASDLESQSSNVSIQA) are compositionally biased toward polar residues.

Interacts with TOP1. Interacts with the SUMO1 conjugating enzyme UBE2I. Interacts with SUMO1. Interacts with NKX3-1; polyubiquitinates NKX3-1 and induces its proteasomal degradation. Interacts with SIN3A; sumoylates SIN3A. Interacts with IKBKE; induced by DNA damage. Interacts with p53/TP53. Interacts with PARK7/DJ-1. In terms of processing, phosphorylation at Ser-99 regulates the E3 ubiquitin-protein ligase activity but not the SUMO1-protein ligase activity. Phosphorylation at Ser-718 increases the E3 ubiquitin-protein ligase activity versus the E3 SUMO1-protein ligase activity resulting in increased p53/TP53 ubiquitination and degradation. Post-translationally, sumoylated.

The protein localises to the nucleus. Its subcellular location is the PML body. The enzyme catalyses S-ubiquitinyl-[E2 ubiquitin-conjugating enzyme]-L-cysteine + [acceptor protein]-L-lysine = [E2 ubiquitin-conjugating enzyme]-L-cysteine + N(6)-ubiquitinyl-[acceptor protein]-L-lysine.. Functionally, functions as an E3 ubiquitin-protein ligase and as a E3 SUMO1-protein ligase. Probable tumor suppressor involved in cell growth, cell proliferation and apoptosis that regulates p53/TP53 stability through ubiquitin-dependent degradation. May regulate chromatin modification through sumoylation of several chromatin modification-associated proteins. May be involved in DNA-damage-induced cell death through IKBKE sumoylation. In Mus musculus (Mouse), this protein is E3 ubiquitin-protein ligase Topors (Topors).